A 490-amino-acid chain; its full sequence is Betaine aldehyde dehydrogenase (490 aa).

K(+) contacts are provided by threonine 26, isoleucine 27, and aspartate 93. 150-152 (GAW) contacts NAD(+). Lysine 162 acts as the Charge relay system in catalysis. An NAD(+)-binding site is contributed by 176–179 (KPSE). Valine 180 serves as a coordination point for K(+). Position 230–233 (230–233 (GVAS)) interacts with NAD(+). K(+) is bound at residue leucine 246. The Proton acceptor role is filled by glutamate 252. Positions 254, 286, and 387 each coordinate NAD(+). The active-site Nucleophile is cysteine 286. Cysteine 286 is subject to Cysteine sulfenic acid (-SOH). K(+)-binding residues include lysine 457 and glycine 460. Glutamate 464 acts as the Charge relay system in catalysis.

This sequence belongs to the aldehyde dehydrogenase family. As to quaternary structure, dimer of dimers. It depends on K(+) as a cofactor.

It catalyses the reaction betaine aldehyde + NAD(+) + H2O = glycine betaine + NADH + 2 H(+). It participates in amine and polyamine biosynthesis; betaine biosynthesis via choline pathway; betaine from betaine aldehyde: step 1/1. Functionally, involved in the biosynthesis of the osmoprotectant glycine betaine. Catalyzes the irreversible oxidation of betaine aldehyde to the corresponding acid. The chain is Betaine aldehyde dehydrogenase from Escherichia coli O139:H28 (strain E24377A / ETEC).